The primary structure comprises 463 residues: A-type ATP synthase subunit B (463 aa).

The protein belongs to the ATPase alpha/beta chains family. In terms of assembly, has multiple subunits with at least A(3), B(3), C, D, E, F, H, I and proteolipid K(x).

It is found in the cell membrane. Component of the A-type ATP synthase that produces ATP from ADP in the presence of a proton gradient across the membrane. The B chain is a regulatory subunit. In Aeropyrum pernix (strain ATCC 700893 / DSM 11879 / JCM 9820 / NBRC 100138 / K1), this protein is A-type ATP synthase subunit B.